Reading from the N-terminus, the 339-residue chain is MISFNNVSKVYESGGQSVHAVEDVTLSVEKGEIFGIIGFSGAGKSTLLRLVNMLERPTAGTISIDDKEITSLSTKELRKLRQRIGMIFQSFNLFNSRTVFGNIAYPLRLAKVPKNEIKERVNELLKFVGLEDKANNYPEQLSGGQKQRVGIARALATSPDILICDEATSALDPETTTEILNLLKKVNREYNLTILLITHEMHVVKEICHRVAVMEKGKVIEEGKLFDVFTQPKTKTTQNFVRSVINDHLPESVLAKIQNGGQIYRLTFTGEETGQPVLSYIAKNYNVDVNVLYGNIIELQNVLFGNLLVELQGEQREIQKALQHLRLQVQLKEVEAHAS.

The ABC transporter domain occupies 2-241 (ISFNNVSKVY…PKTKTTQNFV (240 aa)). 38–45 (GFSGAGKS) provides a ligand contact to ATP.

This sequence belongs to the ABC transporter superfamily. Methionine importer (TC 3.A.1.24) family. In terms of assembly, the complex is composed of two ATP-binding proteins (MetN), two transmembrane proteins (MetI) and a solute-binding protein (MetQ).

It localises to the cell membrane. It carries out the reaction L-methionine(out) + ATP + H2O = L-methionine(in) + ADP + phosphate + H(+). The catalysed reaction is D-methionine(out) + ATP + H2O = D-methionine(in) + ADP + phosphate + H(+). Part of the ABC transporter complex MetNIQ involved in methionine import. Responsible for energy coupling to the transport system. This is Methionine import ATP-binding protein MetN 2 from Bacillus cereus (strain ZK / E33L).